The primary structure comprises 378 residues: Ribosomal RNA large subunit methyltransferase G (378 aa).

Belongs to the methyltransferase superfamily. RlmG family.

It is found in the cytoplasm. The enzyme catalyses guanosine(1835) in 23S rRNA + S-adenosyl-L-methionine = N(2)-methylguanosine(1835) in 23S rRNA + S-adenosyl-L-homocysteine + H(+). Specifically methylates the guanine in position 1835 (m2G1835) of 23S rRNA. This is Ribosomal RNA large subunit methyltransferase G from Escherichia coli O1:K1 / APEC.